The following is a 180-amino-acid chain: Geminin homolog (180 aa).

Polar residues predominate over residues 1 to 27 (MSRIGLQQLNNSARNSPFGSEKATGTK). The interval 1-29 (MSRIGLQQLNNSARNSPFGSEKATGTKQI) is disordered.

Belongs to the geminin family. In terms of assembly, homodimer. Interacts with cdt-1; the interaction most likely inhibits the ability of cdt-1 to load the mini-chromosome maintenance (MCM) complex onto DNA and therefore reduces DNA replication licensing activity. Interacts with nob-1 and ceh-32.

It is found in the cytoplasm. The protein resides in the nucleus. Inhibits DNA replication by binding to the DNA replication licensing factor cdt-1. Its interaction with cdt-1 prevents the cdt-1 loading of the mini-chromosome maintenance (MCM) complex onto DNA and therefore DNA replication licencing. This chain is Geminin homolog, found in Caenorhabditis elegans.